A 370-amino-acid polypeptide reads, in one-letter code: 3-dehydroquinate synthase (370 aa).

NAD(+) is bound by residues 112-116 (GVVGD), 136-137 (TS), lysine 149, lysine 158, and 176-179 (TLRT). Zn(2+) contacts are provided by glutamate 191, histidine 254, and histidine 276.

It belongs to the sugar phosphate cyclases superfamily. Dehydroquinate synthase family. NAD(+) serves as cofactor. It depends on Co(2+) as a cofactor. The cofactor is Zn(2+).

Its subcellular location is the cytoplasm. It catalyses the reaction 7-phospho-2-dehydro-3-deoxy-D-arabino-heptonate = 3-dehydroquinate + phosphate. Its pathway is metabolic intermediate biosynthesis; chorismate biosynthesis; chorismate from D-erythrose 4-phosphate and phosphoenolpyruvate: step 2/7. Catalyzes the conversion of 3-deoxy-D-arabino-heptulosonate 7-phosphate (DAHP) to dehydroquinate (DHQ). In Xanthomonas axonopodis pv. citri (strain 306), this protein is 3-dehydroquinate synthase.